A 204-amino-acid chain; its full sequence is GTP cyclohydrolase 1 (204 aa).

Zn(2+) is bound by residues C92, H95, and C165.

Belongs to the GTP cyclohydrolase I family. In terms of assembly, homomer.

It catalyses the reaction GTP + H2O = 7,8-dihydroneopterin 3'-triphosphate + formate + H(+). It functions in the pathway cofactor biosynthesis; 7,8-dihydroneopterin triphosphate biosynthesis; 7,8-dihydroneopterin triphosphate from GTP: step 1/1. The chain is GTP cyclohydrolase 1 from Mycobacterium avium (strain 104).